A 243-amino-acid polypeptide reads, in one-letter code: Small ribosomal subunit protein uS3 (243 aa).

One can recognise a KH type-2 domain in the interval Ile-39 to Glu-110. Residues Gln-216–Ser-243 are disordered. A compositionally biased stretch (basic and acidic residues) spans Gln-233–Ser-243.

The protein belongs to the universal ribosomal protein uS3 family. As to quaternary structure, part of the 30S ribosomal subunit. Forms a tight complex with proteins S10 and S14.

Binds the lower part of the 30S subunit head. Binds mRNA in the 70S ribosome, positioning it for translation. The chain is Small ribosomal subunit protein uS3 from Prochlorococcus marinus (strain AS9601).